A 1427-amino-acid polypeptide reads, in one-letter code: A disintegrin and metalloproteinase with thrombospondin motifs 13 (1427 aa).

The signal sequence occupies residues 1 to 29 (MHQRHPRARCPPLCVAGILACGFLLGCWG). Residues 30–74 (PSHFQQSCLQALEPQAVSSYLSPGAPLKGRPPSPGFQRQRQRQRR) constitute a propeptide that is removed on maturation. Positions 51–70 (SPGAPLKGRPPSPGFQRQRQ) are disordered. The region spanning 80–286 (LHLELLVAVG…GRARCVWDPP (207 aa)) is the Peptidase M12B domain. Glu83 provides a ligand contact to Ca(2+). 2 N-linked (GlcNAc...) asparagine glycosylation sites follow: Asn142 and Asn146. 3 cysteine pairs are disulfide-bonded: Cys155–Cys208, Cys202–Cys281, and Cys242–Cys265. Asp173, Asp182, Glu184, Asp187, and Glu212 together coordinate Ca(2+). His224 provides a ligand contact to Zn(2+). Glu225 is a catalytic residue. 2 residues coordinate Zn(2+): His228 and His234. Residues Cys281 and Asp284 each contribute to the Ca(2+) site. Positions 287 to 383 (RPQPGSAGHP…LVELTPIAAV (97 aa)) constitute a Disintegrin domain. 4 disulfide bridges follow: Cys311-Cys337, Cys322-Cys347, Cys332-Cys366, and Cys360-Cys371. Residues 384 to 439 (HGRWSSWGPRSPCSRSCGGGVVTRRRQCNNPRPAFGGRACVGADLQAEMCNTQACE) form the TSP type-1 1 domain. A glycan (C-linked (Man) tryptophan) is linked at Trp387. Disulfide bonds link Cys396/Cys433, Cys400/Cys438, Cys411/Cys423, Cys450/Cys487, Cys483/Cys522, Cys508/Cys527, Cys532/Cys548, and Cys545/Cys555. Ser399 carries O-linked (Fuc...) serine glycosylation. Residues 440 to 556 (KTQLEFMSQQ…VCGGDNSTCS (117 aa)) form a cysteine-rich region. The Cell attachment site motif lies at 498-500 (RGD). Asn552, Asn579, and Asn614 each carry an N-linked (GlcNAc...) asparagine glycan. The segment at 556-685 (SPRKGSFTAG…TYFQPKPRQA (130 aa)) is spacer. Asn667 carries N-linked (GlcNAc...) (complex) asparagine glycosylation. TSP type-1 domains follow at residues 682–730 (PRQA…SQQP), 742–805 (CPPY…QPCP), 808–859 (WEVS…PEPC), 896–950 (VWTP…QAVP), 951–1011 (CPAR…SLEP), 1012–1068 (CPPR…VPCL), and 1072–1131 (CTYR…GPCV). An O-linked (Fuc...) serine glycan is attached at Ser698. N-linked (GlcNAc...) (complex) asparagine glycosylation occurs at Asn707. Ser757 is a glycosylation site (O-linked (Fuc...) serine). Residue Asn828 is glycosylated (N-linked (GlcNAc...) asparagine). Residues Ser907, Ser965, Ser1027, and Ser1087 are each glycosylated (O-linked (Fuc...) serine). CUB domains lie at 1192–1298 (CGRQ…FYRE) and 1299–1427 (CDMQ…KEGT). N-linked (GlcNAc...) asparagine glycans are attached at residues Asn1235 and Asn1354.

Zn(2+) serves as cofactor. Requires Ca(2+) as cofactor. In terms of processing, glycosylated. O-fucosylated by POFUT2 on a serine or a threonine residue found within the consensus sequence C1-X(2)-(S/T)-C2-G of the TSP type-1 repeat domains where C1 and C2 are the first and second cysteine residue of the repeat, respectively. Fucosylated repeats can then be further glycosylated by the addition of a beta-1,3-glucose residue by the glucosyltransferase, B3GALTL. Fucosylation mediates the efficient secretion of ADAMTS13. May also be C-glycosylated on tryptophan residues within the consensus sequence W-X-X-W of the TPRs, and also N-glycosylated. These other glycosylations can also facilitate secretion. Post-translationally, the precursor is processed by a furin endopeptidase which cleaves off the pro-domain. Plasma. Expressed primarily in liver.

The protein resides in the secreted. It catalyses the reaction The enzyme cleaves the von Willebrand factor at bond 842-Tyr-|-Met-843 within the A2 domain.. Zinc and calcium ions cooperatively modulate enzyme activity. The cleavage of the pro-domain is not required for protease activity. Dependence on calcium for proteolytic activity is mediated by the high affinity site. Functionally, cleaves the vWF multimers in plasma into smaller forms thereby controlling vWF-mediated platelet thrombus formation. The protein is A disintegrin and metalloproteinase with thrombospondin motifs 13 (ADAMTS13) of Homo sapiens (Human).